The primary structure comprises 118 residues: Large ribosomal subunit protein bL20 (118 aa).

The protein belongs to the bacterial ribosomal protein bL20 family.

Functionally, binds directly to 23S ribosomal RNA and is necessary for the in vitro assembly process of the 50S ribosomal subunit. It is not involved in the protein synthesizing functions of that subunit. This Psychrobacter arcticus (strain DSM 17307 / VKM B-2377 / 273-4) protein is Large ribosomal subunit protein bL20.